The chain runs to 348 residues: Endoglucanase-6B (348 aa).

The substrate site is built by tryptophan 52 and serine 54. Residues aspartate 92 and aspartate 139 each act as proton donor in the active site. Substrate is bound by residues asparagine 183, tryptophan 186, asparagine 222, tryptophan 282, lysine 310, and glutamate 314. The segment covering asparagine 222–proline 241 has biased composition (low complexity). Positions asparagine 222 to serine 244 are disordered.

The protein belongs to the glycosyl hydrolase 6 (cellulase B) family. Monomer.

It carries out the reaction Endohydrolysis of (1-&gt;4)-beta-D-glucosidic linkages in cellulose, lichenin and cereal beta-D-glucans.. Functionally, plays a central role in the recycling of plant biomass. The biological conversion of cellulose to glucose generally requires three types of hydrolytic enzymes: (1) Endoglucanases which cut internal beta-1,4-glucosidic bonds; (2) Exocellobiohydrolases that cut the disaccharide cellobiose from the non-reducing end of the cellulose polymer chain; (3) Beta-1,4-glucosidases which hydrolyze the cellobiose and other short cello-oligosaccharides to glucose. The protein is Endoglucanase-6B of Humicola insolens (Soft-rot fungus).